Reading from the N-terminus, the 278-residue chain is Formamidopyrimidine-DNA glycosylase (278 aa).

Pro2 functions as the Schiff-base intermediate with DNA in the catalytic mechanism. The Proton donor role is filled by Glu3. Lys59 (proton donor; for beta-elimination activity) is an active-site residue. The DNA site is built by His94, Arg113, and Lys154. The segment at 239 to 273 (KVHTKKGEFCIKCSSKIEKIKFKGRGTYFCPTCQK) adopts an FPG-type zinc-finger fold. Residue Arg263 is the Proton donor; for delta-elimination activity of the active site.

The protein belongs to the FPG family. Monomer. Zn(2+) is required as a cofactor.

The catalysed reaction is Hydrolysis of DNA containing ring-opened 7-methylguanine residues, releasing 2,6-diamino-4-hydroxy-5-(N-methyl)formamidopyrimidine.. The enzyme catalyses 2'-deoxyribonucleotide-(2'-deoxyribose 5'-phosphate)-2'-deoxyribonucleotide-DNA = a 3'-end 2'-deoxyribonucleotide-(2,3-dehydro-2,3-deoxyribose 5'-phosphate)-DNA + a 5'-end 5'-phospho-2'-deoxyribonucleoside-DNA + H(+). Its function is as follows. Involved in base excision repair of DNA damaged by oxidation or by mutagenic agents. Acts as a DNA glycosylase that recognizes and removes damaged bases. Has a preference for oxidized purines, such as 7,8-dihydro-8-oxoguanine (8-oxoG). Has AP (apurinic/apyrimidinic) lyase activity and introduces nicks in the DNA strand. Cleaves the DNA backbone by beta-delta elimination to generate a single-strand break at the site of the removed base with both 3'- and 5'-phosphates. The sequence is that of Formamidopyrimidine-DNA glycosylase (mutM) from Mycoplasmopsis pulmonis (strain UAB CTIP) (Mycoplasma pulmonis).